Reading from the N-terminus, the 128-residue chain is Sulfurtransferase TusD (128 aa).

C78 functions as the Cysteine persulfide intermediate in the catalytic mechanism.

It belongs to the DsrE/TusD family. As to quaternary structure, heterohexamer, formed by a dimer of trimers. The hexameric TusBCD complex contains 2 copies each of TusB, TusC and TusD. The TusBCD complex interacts with TusE.

The protein localises to the cytoplasm. Functionally, part of a sulfur-relay system required for 2-thiolation of 5-methylaminomethyl-2-thiouridine (mnm(5)s(2)U) at tRNA wobble positions. Accepts sulfur from TusA and transfers it in turn to TusE. The sequence is that of Sulfurtransferase TusD from Salmonella newport (strain SL254).